The sequence spans 250 residues: Maleate isomerase (250 aa).

Substrate contacts are provided by residues N15, 80-82, Y137, and N167; that span reads CLV. C80 acts as the Nucleophile in catalysis. C80 is modified (S-(2-succinyl)cysteine). C198 serves as the catalytic Proton donor. 199-200 lines the substrate pocket; that stretch reads VQ.

This sequence belongs to the maleate isomerase family. Homodimer.

It carries out the reaction maleate = fumarate. It functions in the pathway cofactor degradation; nicotinate degradation. Functionally, catalyzes cis-trans isomerization of the C2-C3 double bond in maleate to yield fumarate in the aerobic nicotinate degradation pathway. This is Maleate isomerase from Pseudomonas putida (strain ATCC 47054 / DSM 6125 / CFBP 8728 / NCIMB 11950 / KT2440).